Consider the following 328-residue polypeptide: Nickel import system permease protein NikB (328 aa).

6 helical membrane-spanning segments follow: residues 11-31 (LIQM…LMKL), 104-124 (LLIS…LGII), 139-159 (VIST…LLFI), 170-190 (ILSQ…AYII), 229-249 (ILPI…GTVV), and 279-299 (VLFI…LTLL). In terms of domain architecture, ABC transmembrane type-1 spans 100 to 297 (APITLLISFS…IINTIADLLT (198 aa)).

It belongs to the binding-protein-dependent transport system permease family. OppBC subfamily. As to quaternary structure, the complex is composed of two ATP-binding proteins (NikD and NikE), two transmembrane proteins (NikB and NikC) and a solute-binding protein (NikA).

It is found in the cell membrane. Its function is as follows. Part of the ABC transporter complex NikABCDE (Opp2) involved in nickel import. Probably responsible for the translocation of the substrate across the membrane. The chain is Nickel import system permease protein NikB from Staphylococcus aureus (strain MRSA252).